A 220-amino-acid polypeptide reads, in one-letter code: Iron-sulfur cluster repair protein YtfE (220 aa).

Belongs to the RIC family. YtfE subfamily. As to quaternary structure, homodimer.

Its subcellular location is the cytoplasm. Functionally, di-iron-containing protein involved in the repair of iron-sulfur clusters damaged by oxidative and nitrosative stress conditions. The chain is Iron-sulfur cluster repair protein YtfE from Escherichia coli (strain SMS-3-5 / SECEC).